The chain runs to 354 residues: DnaJ homolog shv (354 aa).

An N-terminal signal peptide occupies residues Met1–Ala22. The region spanning Asp25–Gly90 is the J domain. Residues Asn260 and Asn312 are each glycosylated (N-linked (GlcNAc...) asparagine).

As to expression, in the testes, detected at low levels in somatic hub cells, cyst stem cells and the apical tip (at protein level). Levels in the testes decrease with age (at protein level). Expressed at low levels in hub cells, cyst stem cells and germline stem cells, and at high levels in spermatocytes and cyst cells.

It localises to the nucleus. It is found in the cell membrane. The protein resides in the secreted. Maintains stem cell niche architecture in the testes. Activates an extracellular integrin beta-PS pathway which regulates DE-cadherin (shg) levels in somatic hub cells, and is essential for maintaining the number of germline stem cells and the structure and localization of hub cells. The sequence is that of DnaJ homolog shv from Drosophila melanogaster (Fruit fly).